The chain runs to 249 residues: Transcription repressor MYB5 (249 aa).

2 HTH myb-type domains span residues 20-72 (KMGM…MNYL) and 73-127 (RPSV…RKKL). DNA-binding regions (H-T-H motif) lie at residues 48-72 (WRSL…MNYL) and 100-123 (WSLI…NTHL). The segment at 133–180 (DPQTHKPLDANNIHKPEEEVSGGQKYPLEPISSSHTDDTTVNGGDGDS) is disordered. A compositionally biased stretch (basic and acidic residues) spans 135–150 (QTHKPLDANNIHKPEE).

As to quaternary structure, interacts with BHLH002/EGL3/MYC146, BHLH012/MYC1 and BHLH042/TT8. As to expression, siliques.

It is found in the nucleus. Transcription activator, when associated with BHLH002/EGL3/MYC146, BHLH012/MYC1 or BHLH042/TT8. This chain is Transcription repressor MYB5 (MYB5), found in Arabidopsis thaliana (Mouse-ear cress).